Here is a 252-residue protein sequence, read N- to C-terminus: Phosphonates import ATP-binding protein PhnC 1 (252 aa).

The region spanning 2–244 (ISLNKLGVTY…QLEEIYQTLS (243 aa)) is the ABC transporter domain. Residue 35-42 (GSSGAGKS) coordinates ATP.

It belongs to the ABC transporter superfamily. Phosphonates importer (TC 3.A.1.9.1) family. As to quaternary structure, the complex is composed of two ATP-binding proteins (PhnC), two transmembrane proteins (PhnE) and a solute-binding protein (PhnD).

It is found in the cell inner membrane. The catalysed reaction is phosphonate(out) + ATP + H2O = phosphonate(in) + ADP + phosphate + H(+). Functionally, part of the ABC transporter complex PhnCDE involved in phosphonates import. Responsible for energy coupling to the transport system. In Trichodesmium erythraeum (strain IMS101), this protein is Phosphonates import ATP-binding protein PhnC 1.